Reading from the N-terminus, the 66-residue chain is Large ribosomal subunit protein bL33c (66 aa).

Belongs to the bacterial ribosomal protein bL33 family.

The protein localises to the plastid. The protein resides in the chloroplast. The protein is Large ribosomal subunit protein bL33c of Cycas taitungensis (Prince sago).